A 365-amino-acid polypeptide reads, in one-letter code: tRNA N6-adenosine threonylcarbamoyltransferase (365 aa).

Histidine 119 and histidine 123 together coordinate Fe cation. Substrate is bound by residues 141-145 (LVSGG), aspartate 174, glycine 187, and asparagine 289. Residue aspartate 317 coordinates Fe cation. Residues 341-365 (SARPRWPLDKTSPALIGSGKKGAKA) are disordered.

Belongs to the KAE1 / TsaD family. Fe(2+) serves as cofactor.

The protein resides in the cytoplasm. It catalyses the reaction L-threonylcarbamoyladenylate + adenosine(37) in tRNA = N(6)-L-threonylcarbamoyladenosine(37) in tRNA + AMP + H(+). Its function is as follows. Required for the formation of a threonylcarbamoyl group on adenosine at position 37 (t(6)A37) in tRNAs that read codons beginning with adenine. Is involved in the transfer of the threonylcarbamoyl moiety of threonylcarbamoyl-AMP (TC-AMP) to the N6 group of A37, together with TsaE and TsaB. TsaD likely plays a direct catalytic role in this reaction. This Ruegeria sp. (strain TM1040) (Silicibacter sp.) protein is tRNA N6-adenosine threonylcarbamoyltransferase.